The following is a 222-amino-acid chain: Leucyl/phenylalanyl-tRNA--protein transferase (222 aa).

Belongs to the L/F-transferase family.

The protein localises to the cytoplasm. It carries out the reaction N-terminal L-lysyl-[protein] + L-leucyl-tRNA(Leu) = N-terminal L-leucyl-L-lysyl-[protein] + tRNA(Leu) + H(+). It catalyses the reaction N-terminal L-arginyl-[protein] + L-leucyl-tRNA(Leu) = N-terminal L-leucyl-L-arginyl-[protein] + tRNA(Leu) + H(+). The enzyme catalyses L-phenylalanyl-tRNA(Phe) + an N-terminal L-alpha-aminoacyl-[protein] = an N-terminal L-phenylalanyl-L-alpha-aminoacyl-[protein] + tRNA(Phe). In terms of biological role, functions in the N-end rule pathway of protein degradation where it conjugates Leu, Phe and, less efficiently, Met from aminoacyl-tRNAs to the N-termini of proteins containing an N-terminal arginine or lysine. This chain is Leucyl/phenylalanyl-tRNA--protein transferase, found in Legionella pneumophila (strain Lens).